A 336-amino-acid polypeptide reads, in one-letter code: Ornithine carbamoyltransferase, catabolic (336 aa).

Residues Ser62–Thr65, Gln89, Arg113, and His140–Gln143 contribute to the carbamoyl phosphate site. L-ornithine is bound by residues Asn172, Asp236, and Ser240–Met241. Carbamoyl phosphate is bound by residues Cys277–Leu278 and Arg322.

This sequence belongs to the aspartate/ornithine carbamoyltransferase superfamily. OTCase family.

It localises to the cytoplasm. It carries out the reaction carbamoyl phosphate + L-ornithine = L-citrulline + phosphate + H(+). Its pathway is amino-acid degradation; L-arginine degradation via ADI pathway; carbamoyl phosphate from L-arginine: step 2/2. Reversibly catalyzes the transfer of the carbamoyl group from carbamoyl phosphate (CP) to the N(epsilon) atom of ornithine (ORN) to produce L-citrulline. This chain is Ornithine carbamoyltransferase, catabolic, found in Staphylococcus aureus (strain MSSA476).